The primary structure comprises 252 residues: Short-chain dehydrogenase anuI (252 aa).

L18, D65, N92, Y171, K175, and T206 together coordinate NADP(+). Y171 serves as the catalytic Proton acceptor. The active-site Proton donor is the Y171. The Lowers pKa of active site Tyr role is filled by K175.

This sequence belongs to the short-chain dehydrogenases/reductases (SDR) family.

Functionally, highly reducing polyketide synthase; part of the gene cluster that mediates the biosynthesis of annullatin D, an alkylated aromatic polyketide with a fused dihydrobenzofuran lactone ring system that exhibits potent agonistic activities toward the cannabinoid receptors. AnuI does not seem to play a role within the pathway. The annullatin backbone 2-hydroxymethyl-3-pentylphenol is assembled from one acetyl-CoA starter unit and 5 malonyl-CoA elongation units by cooperation of the highly reducing polyketide synthase anuA, the short-chain dehydrogenase anuB and the oxidoreductase anuC, before being hydroxylated at the C-5 alkyl chain by the cytochrome P450 monooxygenase anuE to form (8S)-annullatin E. The prenyltransferase anuH subsequently installs one isoprenyl group at the benzene ring to form (8S)-annullatin J. Enzymatic or nonenzymatic dihydro-benzofuran ring formation between the prenyl and the phenolic hydroxyl groups in (8S)-annullatin J results in two diastereomers (2S,9S)-annullatin H and compound 12. The intermediate (2S,9S)-annullatin H is then converted to (2S,9S)-annullatin D by the FAD-linked oxidoreductase anuG-catalyzed five-member lactone ring formation. The isomer 12 acts as a substrate for the short-chain dehydrogenase anuF and is oxidized to (2R)-annullatin F, which is subsequently acetylated by an acetyltransferase leading to (2R)-annullatin G formation. The remaining enzymes identified within the cluster, anuD, anuI and anuJ, seem not to be involved in annullatin biosynthesis. This Penicillium roqueforti (strain FM164) protein is Short-chain dehydrogenase anuI.